A 204-amino-acid polypeptide reads, in one-letter code: RNA-free ribonuclease P (204 aa).

Belongs to the HARP family.

It carries out the reaction Endonucleolytic cleavage of RNA, removing 5'-extranucleotides from tRNA precursor.. In terms of biological role, RNA-free RNase P that catalyzes the removal of the 5'-leader sequence from pre-tRNA to produce the mature 5'-terminus. In Pyrococcus abyssi (strain GE5 / Orsay), this protein is RNA-free ribonuclease P.